The sequence spans 77 residues: MNRTSESVEPQQNEKTAVHWSREWVPVVVDTYSNEDDEDNEEGDESRPQRTFLVKRWVQDNVQVEKKGDEETAAADN.

A compositionally biased stretch (polar residues) spans 1-15 (MNRTSESVEPQQNEK). Disordered regions lie at residues 1 to 20 (MNRTSESVEPQQNEKTAVHW) and 31 to 52 (TYSNEDDEDNEEGDESRPQRTF). A compositionally biased stretch (acidic residues) spans 33 to 44 (SNEDDEDNEEGD).

This is an uncharacterized protein from Schizosaccharomyces pombe (strain 972 / ATCC 24843) (Fission yeast).